The sequence spans 127 residues: Aspartate 1-decarboxylase (127 aa).

The active-site Schiff-base intermediate with substrate; via pyruvic acid is serine 25. At serine 25 the chain carries Pyruvic acid (Ser). Threonine 57 is a substrate binding site. The Proton donor role is filled by tyrosine 58. 73-75 (GAA) contacts substrate.

This sequence belongs to the PanD family. As to quaternary structure, heterooctamer of four alpha and four beta subunits. Pyruvate serves as cofactor. In terms of processing, is synthesized initially as an inactive proenzyme, which is activated by self-cleavage at a specific serine bond to produce a beta-subunit with a hydroxyl group at its C-terminus and an alpha-subunit with a pyruvoyl group at its N-terminus.

It localises to the cytoplasm. It carries out the reaction L-aspartate + H(+) = beta-alanine + CO2. It functions in the pathway cofactor biosynthesis; (R)-pantothenate biosynthesis; beta-alanine from L-aspartate: step 1/1. Functionally, catalyzes the pyruvoyl-dependent decarboxylation of aspartate to produce beta-alanine. This Carboxydothermus hydrogenoformans (strain ATCC BAA-161 / DSM 6008 / Z-2901) protein is Aspartate 1-decarboxylase.